A 61-amino-acid polypeptide reads, in one-letter code: MSRTSLEVKAKRKPKFSARAYNRCPLCGRPRAFLRQFGICRICFRNMALRGELPGVRKSSW.

Residues C24, C27, C40, and C43 each coordinate Zn(2+).

It belongs to the universal ribosomal protein uS14 family. Zinc-binding uS14 subfamily. In terms of assembly, part of the 30S ribosomal subunit. Contacts proteins S3 and S10. The cofactor is Zn(2+).

Binds 16S rRNA, required for the assembly of 30S particles and may also be responsible for determining the conformation of the 16S rRNA at the A site. This chain is Small ribosomal subunit protein uS14, found in Desulfovibrio desulfuricans (strain ATCC 27774 / DSM 6949 / MB).